A 254-amino-acid polypeptide reads, in one-letter code: Undecaprenyl-diphosphatase (254 aa).

Transmembrane regions (helical) follow at residues 1-21, 41-61, 75-95, 96-116, 130-150, 174-194, 210-230, and 234-254; these read MGII…FLPV, AHKA…VFLY, LIIA…IIKG, LFSP…FIAV, ILKI…IAMI, AEFS…YDIM, TGFV…IGFV, and NFVP…LFVL.

The protein belongs to the UppP family.

The protein resides in the cell inner membrane. It catalyses the reaction di-trans,octa-cis-undecaprenyl diphosphate + H2O = di-trans,octa-cis-undecaprenyl phosphate + phosphate + H(+). In terms of biological role, catalyzes the dephosphorylation of undecaprenyl diphosphate (UPP). Confers resistance to bacitracin. This is Undecaprenyl-diphosphatase from Persephonella marina (strain DSM 14350 / EX-H1).